Here is a 436-residue protein sequence, read N- to C-terminus: MSTGFFGNLQPISYEGPQSDNPLAFRHYNPDEVVLGKRLEDHLRFAVCYWHTFVWPGGDPFGGQTFERPWFGDTMERARLKADVAFELFEILGVPFFTFHDADVRPEGASYSESVARLNDIADYIAAKMEKTGVRLLWGTANLFSHRRFMAGAATNPDPDVFAYAAATVKACIDVTKRLNGENYVLWGGREGYETLLNTDLGRELDQLGRFLSMVVDYKHRIGFKGAILIEPKPQEPTKHQYDFDVGTVYGFLKRYGLEDEVKVNIEQGHALLAGHSFEHELALAATLGIFGSIDMNRNDYQSGWDTDQFPNNAPEAALAYYYILQAGGFTTGGTNFDAKLRRQSLDPEDLVAAHIGGMDICAQGLKAAARMIEDKALSGPLEERYSGWNATEAQAMLKGERSLEAIAERVARENLDPKPRSGRQEKLENIINRYV.

Residues histidine 100 and aspartate 103 contribute to the active site. Positions 231, 267, 270, 295, 306, 308, and 338 each coordinate Mg(2+).

It belongs to the xylose isomerase family. Homotetramer. Mg(2+) is required as a cofactor.

The protein localises to the cytoplasm. The catalysed reaction is alpha-D-xylose = alpha-D-xylulofuranose. The chain is Xylose isomerase from Chelativorans sp. (strain BNC1).